A 340-amino-acid polypeptide reads, in one-letter code: Ferrochelatase (340 aa).

Fe cation-binding residues include H189 and E292.

This sequence belongs to the ferrochelatase family.

Its subcellular location is the cytoplasm. It catalyses the reaction heme b + 2 H(+) = protoporphyrin IX + Fe(2+). The protein operates within porphyrin-containing compound metabolism; protoheme biosynthesis; protoheme from protoporphyrin-IX: step 1/1. Catalyzes the ferrous insertion into protoporphyrin IX. This is Ferrochelatase from Pseudomonas paraeruginosa (strain DSM 24068 / PA7) (Pseudomonas aeruginosa (strain PA7)).